We begin with the raw amino-acid sequence, 159 residues long: MPYSLEEQTYFMQEALKEAEKSLQKAEIPIGCVIVKDGEIIGRGHNAREESNQAIMHAEMMAINEANAHEGNWRLLDTTLFVTIEPCVMCSGAIGLARIPHVIYGASNQKFGGADSLYQILTDERLNHRVQVERGLLAADCANIMQTFFRQGRERKKNS.

The CMP/dCMP-type deaminase domain maps to 6-133 (EEQTYFMQEA…ERLNHRVQVE (128 aa)). Position 57 (His-57) interacts with Zn(2+). Catalysis depends on Glu-59, which acts as the Proton donor. Residues Cys-87 and Cys-90 each coordinate Zn(2+).

Belongs to the cytidine and deoxycytidylate deaminase family. In terms of assembly, homodimer. The cofactor is Zn(2+).

It catalyses the reaction adenosine(34) in tRNA + H2O + H(+) = inosine(34) in tRNA + NH4(+). Catalyzes the deamination of adenosine to inosine at the wobble position 34 of tRNA(Arg2). The polypeptide is tRNA-specific adenosine deaminase (Streptococcus pyogenes serotype M18 (strain MGAS8232)).